A 180-amino-acid chain; its full sequence is Small ribosomal subunit protein uS5 (180 aa).

The tract at residues 1 to 20 (MAKMQGRMQGKVAPGDDRGD) is disordered. The S5 DRBM domain maps to 22–85 (LKEKMVAINR…DEARRKMIKV (64 aa)).

Belongs to the universal ribosomal protein uS5 family. In terms of assembly, part of the 30S ribosomal subunit. Contacts proteins S4 and S8.

Functionally, with S4 and S12 plays an important role in translational accuracy. Its function is as follows. Located at the back of the 30S subunit body where it stabilizes the conformation of the head with respect to the body. The polypeptide is Small ribosomal subunit protein uS5 (Nitrosospira multiformis (strain ATCC 25196 / NCIMB 11849 / C 71)).